Here is a 320-residue protein sequence, read N- to C-terminus: GPI-specific phospholipase A2-like PGAP3 (320 aa).

A signal peptide spans 1-20 (MAGLAARLVLLAGAAALASG). Over 21-98 (SQGDREPVYR…QFHGKWPFSR (78 aa)) the chain is Lumenal. The N-linked (GlcNAc...) asparagine glycan is linked to Asn40. A helical membrane pass occupies residues 99–119 (FLFFQEPASAVASFLNGLASL). The Cytoplasmic portion of the chain corresponds to 120–135 (VMLCRYRTFVPASSPM). The chain crosses the membrane as a helical span at residues 136–156 (YHTCVAFAWVSLNAWFWSTVF). The Lumenal portion of the chain corresponds to 157–169 (HTRDTDLTEKMDY). A helical transmembrane segment spans residues 170-190 (FCASTVILHSIYLCCVRTVGL). The Cytoplasmic segment spans residues 191–193 (QHP). Residues 194 to 214 (AVVSAFRALLLLMLTVHVSYL) traverse the membrane as a helical segment. Residues 215 to 224 (SLIRFDYGYN) are Lumenal-facing. Residues 225–245 (LVANVAIGLVNVVWWLAWCLW) traverse the membrane as a helical segment. Topologically, residues 246–257 (NQRRLPHVRKCV) are cytoplasmic. A helical membrane pass occupies residues 258-278 (VVVLLLQGLSLLELLDFPPLF). Position 279 (Trp279) is a topological domain, lumenal. The helical transmembrane segment at 280 to 299 (VLDAHAIWHISTIPVHVLFF) threads the bilayer. The Cytoplasmic portion of the chain corresponds to 300-320 (SFLEDDSLYLLKESEDKFKLD).

This sequence belongs to the PGAP3 family. Ubiquitously expressed, with highest levels in thyroid and placenta.

The protein localises to the golgi apparatus membrane. In terms of biological role, involved in the fatty acid remodeling steps of GPI-anchor maturation where the unsaturated acyl chain at sn-2 of inositol phosphate is replaced by a saturated stearoyl chain. May catalyze the first step of the fatty acid remodeling, by removing the unsaturated acyl chain at sn-2 of inositol phosphate, generating a lyso-GPI intermediate. The fatty acid remodeling steps is critical for the integration of GPI-APs into lipid rafts. The polypeptide is GPI-specific phospholipase A2-like PGAP3 (Homo sapiens (Human)).